The following is a 743-amino-acid chain: Tegument protein UL46 homolog (743 aa).

Disordered stretches follow at residues 437–481 (GCPP…VSSA), 522–590 (HQRS…SGYM), and 693–743 (RVRL…VSSL). Over residues 526-552 (DSSSSDNSSCSSTETEYITISSTPSPT) the composition is skewed to low complexity. Composition is skewed to polar residues over residues 573–586 (QPAN…SPAN) and 697–716 (GTTT…TPSS). Low complexity predominate over residues 722–743 (RTLSTSESPESSPEQQERVSSL).

It belongs to the herpesviridae HHV-1 VP11/12 protein family. Interacts with VP16.

The protein localises to the virion tegument. The protein resides in the host cell membrane. Abundant tegument protein. Trans-activates the immediate early genes. The sequence is that of Tegument protein UL46 homolog from Equus caballus (Horse).